A 282-amino-acid polypeptide reads, in one-letter code: MTASHIDYTIRYAVDPAAAARMDTDALRANFHIGDLFRQGRISLTYSHYDRMIVGGAMPVDKPLALETIRPTGTARFLERRELIAVNIGGPGRIEMNGESFRLEPRDMAYAGMGEDVTFSSEDPAVPAKFYLLSAPAHQALPRRHIRIGDAKRLDLGSAATSNERSIFQFIHPEGVKTCQLVVGMTQLAPGSVWNTMPCHVHDRRMEAYLYFDLDDSARVLHLMGEPSETRHIVMAREEAVLSPPWSIHSGCGTANYAFIWAMAGDNIDYTDVEMVPMETLR.

Zn(2+) is bound by residues histidine 200, histidine 202, glutamate 207, and histidine 249.

It belongs to the KduI family. Requires Zn(2+) as cofactor.

It catalyses the reaction 5-dehydro-4-deoxy-D-glucuronate = 3-deoxy-D-glycero-2,5-hexodiulosonate. It functions in the pathway glycan metabolism; pectin degradation; 2-dehydro-3-deoxy-D-gluconate from pectin: step 4/5. Functionally, catalyzes the isomerization of 5-dehydro-4-deoxy-D-glucuronate to 3-deoxy-D-glycero-2,5-hexodiulosonate. This is 4-deoxy-L-threo-5-hexosulose-uronate ketol-isomerase 2 (kduI2) from Rhizobium meliloti (strain 1021) (Ensifer meliloti).